A 397-amino-acid polypeptide reads, in one-letter code: Ethanolaminephosphotransferase 1 (397 aa).

Residue Ala2 is modified to N-acetylalanine. Transmembrane regions (helical) follow at residues 47–69 (WLAP…LLMA), 84–103 (HVPD…AYTL), 123–145 (LFDH…SIFG), 150–172 (GVSV…LSHW), 179–201 (ILFL…IVTA), 221–243 (LFTA…LNFF), 256–278 (VYEA…AWIL), 291–310 (VFYF…LIVC), 317–339 (CPTL…LGVA), and 344–366 (SILL…VRVV). Sec387 is a non-standard amino acid (selenocysteine).

Belongs to the CDP-alcohol phosphatidyltransferase class-I family. It depends on Mg(2+) as a cofactor. Mn(2+) serves as cofactor.

The protein localises to the endoplasmic reticulum membrane. The enzyme catalyses CDP-ethanolamine + a 1,2-diacyl-sn-glycerol = a 1,2-diacyl-sn-glycero-3-phosphoethanolamine + CMP + H(+). The catalysed reaction is 1-O-alkyl-2-acyl-sn-glycerol + CDP-ethanolamine = a 1-O-alkyl-2-acyl-sn-glycero-3-phosphoethanolamine + CMP + H(+). It participates in phospholipid metabolism; phosphatidylethanolamine biosynthesis; phosphatidylethanolamine from ethanolamine: step 3/3. Its function is as follows. Ethanolaminephosphotransferase that catalyzes the transfer of phosphoethanolamine (PE) from CDP-ethanolamine to lipid acceptors, the final step in the synthesis of PE via the 'Kennedy' pathway. PE is the second most abundant phospholipid of membranes in mammals and is involved in various membrane-related cellular processes. The enzyme is critical for the synthesis of several PE species and also catalyzes the synthesis of plasmanyl-PE, a lipid required for proper myelination and neurodevelopment, from 1-alkyl-2-acylglycerol. The protein is Ethanolaminephosphotransferase 1 of Pongo abelii (Sumatran orangutan).